A 504-amino-acid polypeptide reads, in one-letter code: MAAQALALLREVARLEAPLEELRALHSVLQAVPLNELRQQAAELRLGPLFSLLNENHREKTTLCVSILERLLQAMEPVHVARNLRVDLQRGLIHPDDSVKILTLSQIGRIVENSDAVTEILNNAELLKQIVYCIGGENLSVAKAAIKSLSRISLTQAGLEALFESNLLDDLKSVMKTNDIVRYRVYELIIEISSVSPESLNYCTTSGLVTQLLRELTGEDVLVRATCIEMVTSLAYTHHGRQYLAQEGVIDQISNIIVGADSDPFSSFYLPGFVKFFGNLAVMDSPQQICERYPIFVEKVFEMIESQDPTMIGVAVDTVGILGSNVEGKQVLQKTGTRFERLLMRIGHQSKNAPVELKIRCLDAISSLLYLPPEQQTDDLLRMTESWFSSLSRDPLELFRGISSQPFPELHCAALKVFTAIANQPWAQKLMFNSPGFVEYVVDRSVEHDKASKDAKYELVKALANSKTIAEIFGNPNYLRLRTYLSEGPYYVKPVSTTAVEGAE.

Alanine 2 bears the N-acetylalanine mark.

The protein belongs to the proteasome subunit S5B/HSM3 family. In terms of assembly, interacts with PSMC1, PSMC2, PSMD1 and PSMD6. Part of transient complex containing PSMD5, PSMC2, PSMC1 and PSMD2 formed during the assembly of the 26S proteasome.

Its function is as follows. Acts as a chaperone during the assembly of the 26S proteasome, specifically of the base subcomplex of the PA700/19S regulatory complex (RC). In the initial step of the base subcomplex assembly is part of an intermediate PSMD5:PSMC2:PSMC1:PSMD2 module which probably assembles with a PSMD10:PSMC4:PSMC5:PAAF1 module followed by dissociation of PSMD5. The polypeptide is 26S proteasome non-ATPase regulatory subunit 5 (PSMD5) (Homo sapiens (Human)).